We begin with the raw amino-acid sequence, 227 residues long: Charged multivesicular body protein 4c (227 aa).

The interval 1 to 27 (MSKITKLFKSSGGSGSSSKNRKGPSAQ) is disordered. Coiled-coil stretches lie at residues 32 to 94 (KLRE…STIE) and 129 to 187 (LEKI…MANV). The interval 178 to 227 (EDLNSQMANVNLPSVPSSKLPSTKLPSRPASSRKKVEDDDDMQMLAAWAT) is disordered. The segment covering 189-206 (LPSVPSSKLPSTKLPSRP) has biased composition (low complexity).

The protein belongs to the SNF7 family. Probable core component of the endosomal sorting required for transport complex III (ESCRT-III). ESCRT-III components are thought to multimerize to form a flat lattice on the perimeter membrane of the endosome.

Its subcellular location is the cytoplasm. It localises to the cytosol. The protein localises to the late endosome membrane. Functionally, probable core component of the endosomal sorting required for transport complex III (ESCRT-III) which is involved in multivesicular bodies (MVBs) formation and sorting of endosomal cargo proteins into MVBs. MVBs contain intraluminal vesicles (ILVs) that are generated by invagination and scission from the limiting membrane of the endosome and mostly are delivered to lysosomes enabling degradation of membrane proteins, such as stimulated growth factor receptors, lysosomal enzymes and lipids. Key component of the cytokinesis checkpoint, a process required to delay abscission to prevent both premature resolution of intercellular chromosome bridges and accumulation of DNA damage. The protein is Charged multivesicular body protein 4c (chmp4c) of Xenopus laevis (African clawed frog).